The sequence spans 403 residues: Zinc metalloproteinase nas-8 (403 aa).

Positions 1 to 29 (MRRNDLLNNKITIFLSSLSLFVIIIPIYA) are cleaved as a signal peptide. A propeptide spanning residues 30–111 (AEKDLLPPST…DPKNSESLRR (82 aa)) is cleaved from the precursor. Residues 112–307 (NGVITGTRKW…LKMNLMYQCS (196 aa)) form the Peptidase M12A domain. Disulfide bonds link Cys-154/Cys-306, Cys-176/Cys-195, Cys-338/Cys-372, Cys-345/Cys-365, and Cys-352/Cys-369. His-203 contacts Zn(2+). Residue Glu-204 is part of the active site. Zn(2+) is bound by residues His-207 and His-213. Positions 338-372 (CRDRTNLCWRWIDRCKSFFFEQIMKEFCSLSCGYC) constitute a ShKT domain. N-linked (GlcNAc...) asparagine glycosylation is present at Asn-386.

Zn(2+) is required as a cofactor.

The protein localises to the secreted. The enzyme catalyses Hydrolysis of peptide bonds in substrates containing five or more amino acids, preferentially with Ala in P1', and Pro in P2'.. Metalloprotease. The polypeptide is Zinc metalloproteinase nas-8 (nas-8) (Caenorhabditis elegans).